The primary structure comprises 865 residues: NBPF family member NBPF11 (865 aa).

A coiled-coil region spans residues 70–130; the sequence is MLRNERQFKE…RSLNEHLQAL (61 aa). Residues 161–200 form a disordered region; the sequence is KLSPENDEDEDEDVQVEEDEKVLESSAPREVQKAEESKVP. A compositionally biased stretch (acidic residues) spans 165–181; the sequence is ENDEDEDEDVQVEEDEK. Residues 165 to 259 form the Olduvai 1 domain; sequence ENDEDEDEDV…GCQDALNILP (95 aa). Over residues 190–200 the composition is skewed to basic and acidic residues; sequence EVQKAEESKVP. The stretch at 339–401 forms a coiled coil; the sequence is KSMLRNERQF…RSLNEHLQAL (63 aa). Olduvai domains follow at residues 436–528, 529–617, 620–675, 676–767, and 770–865; these read ENDN…HIIP, ENES…ATGP, SREL…VDMD, EIEK…PPCP, and SREL…SAAC. 2 disordered regions span residues 450–475 and 520–567; these read AEKV…EDSL and WEDA…GYST. 2 stretches are compositionally biased toward acidic residues: residues 530-539 and 550-562; these read NESDDEEEEE and ESEE…ESWD. Residues 829-865 are disordered; it reads RGRGRKEGEEDQRRKEEGEEKKGKKIKTHHAPGSAAC. The segment covering 833–850 has biased composition (basic and acidic residues); that stretch reads RKEGEEDQRRKEEGEEKK.

Belongs to the NBPF family. Expressed in spinal cord.

It is found in the cytoplasm. The sequence is that of NBPF family member NBPF11 from Homo sapiens (Human).